A 954-amino-acid chain; its full sequence is Calsyntenin-1 (954 aa).

The first 25 residues, 1-25 (MRIRGVKPFASAVGLLLGLLYAVDA), serve as a signal peptide directing secretion. The Extracellular segment spans residues 26-833 (AKVNKHKPWI…THQASVVPSA (808 aa)). 2 Cadherin domains span residues 35-151 (IETT…SPVF) and 152-252 (KEKS…KPSW). N-linked (GlcNAc...) asparagine glycans are attached at residues Asn333, Asn353, and Asn552. The chain crosses the membrane as a helical span at residues 834–854 (ATIVIVVCVSFLVFMIILGVF). The Cytoplasmic segment spans residues 855-954 (RIRAAHQRTM…LEWDDSTLTY (100 aa)). The segment at 891–954 (TYEDQHSSEE…LEWDDSTLTY (64 aa)) is disordered. Residues 900 to 935 (EEGDEEEEESEDGEEEDDITSAESDSSEDEAGEQED) are compositionally biased toward acidic residues.

This sequence belongs to the calsyntenin family. As to quaternary structure, homooligomer and heterooligomer; mediates both homophilic and heterophilc interactions with clstn2 and clstn3 paralogs via cadherin domains. In terms of tissue distribution, by 48 hours post-fertilization (hpf), widely expressed in the brain, with strong expression in the telencephalon and the midbrain.

The protein localises to the postsynaptic cell membrane. The protein resides in the endoplasmic reticulum membrane. Its subcellular location is the golgi apparatus membrane. It localises to the cell projection. It is found in the neuron projection. Postsynaptic adhesion molecule involved in vesicle trafficking; required for branching of peripheral but not central axons of sensory neurons. Promotes synapse development by acting as a cell adhesion molecule at the postsynaptic membrane, which associates with presynaptic neurexins. In Danio rerio (Zebrafish), this protein is Calsyntenin-1.